Here is a 76-residue protein sequence, read N- to C-terminus: Protein RALF-like 26 (76 aa).

Positions 1 to 22 (MKAWMIILLVICVAVVVEQSEA) are cleaved as a signal peptide. Cysteines 37 and 46 form a disulfide. A glycan (N-linked (GlcNAc...) asparagine) is linked at Asn61. A disulfide bridge connects residues Cys66 and Cys72.

Belongs to the plant rapid alkalinization factor (RALF) family.

It is found in the secreted. Its function is as follows. Cell signaling peptide that may regulate plant stress, growth, and development. Mediates a rapid alkalinization of extracellular space by mediating a transient increase in the cytoplasmic Ca(2+) concentration leading to a calcium-dependent signaling events through a cell surface receptor and a concomitant activation of some intracellular mitogen-activated protein kinases. The chain is Protein RALF-like 26 (RALFL26) from Arabidopsis thaliana (Mouse-ear cress).